The sequence spans 316 residues: L-lactate dehydrogenase (316 aa).

NAD(+)-binding positions include V15, D37, K42, Y68, and 82–83 (GL). Residues Q85, R91, and 123-126 (NPVD) each bind substrate. NAD(+) contacts are provided by residues 121 to 123 (ASN) and T146. 151–154 (DTSR) contributes to the substrate binding site. R156 and H171 together coordinate beta-D-fructose 1,6-bisphosphate. H178 (proton acceptor) is an active-site residue. Residue Y222 is modified to Phosphotyrosine. T231 is a substrate binding site.

Belongs to the LDH/MDH superfamily. LDH family. In terms of assembly, homotetramer.

It is found in the cytoplasm. It catalyses the reaction (S)-lactate + NAD(+) = pyruvate + NADH + H(+). It functions in the pathway fermentation; pyruvate fermentation to lactate; (S)-lactate from pyruvate: step 1/1. Allosterically activated by fructose 1,6-bisphosphate (FBP). Functionally, catalyzes the conversion of lactate to pyruvate. This Borrelia turicatae (strain 91E135) protein is L-lactate dehydrogenase.